The chain runs to 84 residues: ATP synthase subunit c (84 aa).

2 helical membrane-spanning segments follow: residues 9-29 (IIGASILLAFAALGTAIGFAI) and 54-74 (IVAGLLDAIAMIAVGISLLFI).

Belongs to the ATPase C chain family. In terms of assembly, F-type ATPases have 2 components, F(1) - the catalytic core - and F(0) - the membrane proton channel. F(1) has five subunits: alpha(3), beta(3), gamma(1), delta(1), epsilon(1). F(0) has three main subunits: a(1), b(2) and c(10-14). The alpha and beta chains form an alternating ring which encloses part of the gamma chain. F(1) is attached to F(0) by a central stalk formed by the gamma and epsilon chains, while a peripheral stalk is formed by the delta and b chains.

It is found in the cell inner membrane. In terms of biological role, f(1)F(0) ATP synthase produces ATP from ADP in the presence of a proton or sodium gradient. F-type ATPases consist of two structural domains, F(1) containing the extramembraneous catalytic core and F(0) containing the membrane proton channel, linked together by a central stalk and a peripheral stalk. During catalysis, ATP synthesis in the catalytic domain of F(1) is coupled via a rotary mechanism of the central stalk subunits to proton translocation. Its function is as follows. Key component of the F(0) channel; it plays a direct role in translocation across the membrane. A homomeric c-ring of between 10-14 subunits forms the central stalk rotor element with the F(1) delta and epsilon subunits. The chain is ATP synthase subunit c from Haemophilus influenzae (strain ATCC 51907 / DSM 11121 / KW20 / Rd).